Reading from the N-terminus, the 161-residue chain is Nucleoside diphosphate kinase (161 aa).

Residues Lys-13, Phe-61, Arg-89, Thr-95, Arg-106, and Asn-116 each contribute to the ATP site. The active-site Pros-phosphohistidine intermediate is His-119.

This sequence belongs to the NDK family. The cofactor is Mg(2+).

It localises to the cytoplasm. The catalysed reaction is a 2'-deoxyribonucleoside 5'-diphosphate + ATP = a 2'-deoxyribonucleoside 5'-triphosphate + ADP. The enzyme catalyses a ribonucleoside 5'-diphosphate + ATP = a ribonucleoside 5'-triphosphate + ADP. Major role in the synthesis of nucleoside triphosphates other than ATP. The ATP gamma phosphate is transferred to the NDP beta phosphate via a ping-pong mechanism, using a phosphorylated active-site intermediate. This is Nucleoside diphosphate kinase from Halobacterium salinarum (strain ATCC 29341 / DSM 671 / R1).